The primary structure comprises 510 residues: Lysine--tRNA ligase (510 aa).

The Mg(2+) site is built by Glu420 and Glu427.

Belongs to the class-II aminoacyl-tRNA synthetase family. In terms of assembly, homodimer. Mg(2+) is required as a cofactor.

It localises to the cytoplasm. It catalyses the reaction tRNA(Lys) + L-lysine + ATP = L-lysyl-tRNA(Lys) + AMP + diphosphate. The chain is Lysine--tRNA ligase from Clostridium novyi (strain NT).